We begin with the raw amino-acid sequence, 836 residues long: Homeobox-leucine zipper protein ATHB-15 (836 aa).

Positions D14–K77 form a DNA-binding region, homeobox. A coiled-coil region spans residues R72–S115. The region spanning R151–S379 is the START domain.

It belongs to the HD-ZIP homeobox family. Class III subfamily. In terms of assembly, interacts with ESR1 and ESR2. Interacts with ZPR3. As to expression, highly expressed the developing vascular elements and the adaxial portion of cotyledons. Expressed in developing ovules, stamens and carpels. Expressed in procambium and shoot meristem.

Its subcellular location is the nucleus. Its function is as follows. Probable transcription factor involved in the regulation of meristem development to promote lateral organ formation. May regulates procambial and vascular tissue formation or maintenance, and vascular development in inflorescence stems. The sequence is that of Homeobox-leucine zipper protein ATHB-15 (ATHB-15) from Arabidopsis thaliana (Mouse-ear cress).